A 445-amino-acid chain; its full sequence is Phosphoglucosamine mutase (445 aa).

Residue serine 102 is the Phosphoserine intermediate of the active site. 4 residues coordinate Mg(2+): serine 102, aspartate 241, aspartate 243, and aspartate 245. Serine 102 bears the Phosphoserine mark.

Belongs to the phosphohexose mutase family. Mg(2+) is required as a cofactor. In terms of processing, activated by phosphorylation.

The enzyme catalyses alpha-D-glucosamine 1-phosphate = D-glucosamine 6-phosphate. Functionally, catalyzes the conversion of glucosamine-6-phosphate to glucosamine-1-phosphate. This Shewanella denitrificans (strain OS217 / ATCC BAA-1090 / DSM 15013) protein is Phosphoglucosamine mutase.